The chain runs to 161 residues: DNA-directed RNA polymerase 18 kDa subunit (161 aa).

The protein belongs to the poxviridae DNA-directed RNA polymerase 18 kDa subunit family. The DNA-dependent RNA polymerase used for intermediate and late genes expression consists of eight subunits Rpo30/OPG66, Rpo7/OPG90, Rpo22/OPG103, Rpo147/OPG105, Rpo18/OPG119, Rpo19/OPG131, Rpo132/OPG151 and Rpo35/OPG156. The same holoenzyme, with the addition of the transcription-specificity factor OPG109, is used for early gene expression. Post-translationally, apparently non-glycosylated.

The protein resides in the virion. The enzyme catalyses RNA(n) + a ribonucleoside 5'-triphosphate = RNA(n+1) + diphosphate. Part of the DNA-dependent RNA polymerase which catalyzes the transcription of viral DNA into RNA using the four ribonucleoside triphosphates as substrates. Responsible for the transcription of early, intermediate and late genes. DNA-dependent RNA polymerase associates with the early transcription factor (ETF), itself composed of OPG118 and OPG133, thereby allowing the early genes transcription. Late transcription, and probably also intermediate transcription, require newly synthesized RNA polymerase. The chain is DNA-directed RNA polymerase 18 kDa subunit (OPG119) from Cynomys gunnisoni (Gunnison's prairie dog).